Here is a 179-residue protein sequence, read N- to C-terminus: MAKVAKKYAKALFDVALDTNQLDVVYEDLETISHSSFDFIKQLKAIDSNPSLTANQREEFVERVYNEANPYVVNTLKVLADNRHISIVENVFKSFQNLYNKYYKQDFAIIESTYELSEDEISRIVELIKKQTELSNVIVNTKINQDLIGGFRVKVGTTVMDGSVRNDLVQLQRKFERAN.

It belongs to the ATPase delta chain family. As to quaternary structure, F-type ATPases have 2 components, F(1) - the catalytic core - and F(0) - the membrane proton channel. F(1) has five subunits: alpha(3), beta(3), gamma(1), delta(1), epsilon(1). F(0) has three main subunits: a(1), b(2) and c(10-14). The alpha and beta chains form an alternating ring which encloses part of the gamma chain. F(1) is attached to F(0) by a central stalk formed by the gamma and epsilon chains, while a peripheral stalk is formed by the delta and b chains.

The protein resides in the cell membrane. Functionally, f(1)F(0) ATP synthase produces ATP from ADP in the presence of a proton or sodium gradient. F-type ATPases consist of two structural domains, F(1) containing the extramembraneous catalytic core and F(0) containing the membrane proton channel, linked together by a central stalk and a peripheral stalk. During catalysis, ATP synthesis in the catalytic domain of F(1) is coupled via a rotary mechanism of the central stalk subunits to proton translocation. Its function is as follows. This protein is part of the stalk that links CF(0) to CF(1). It either transmits conformational changes from CF(0) to CF(1) or is implicated in proton conduction. This chain is ATP synthase subunit delta, found in Staphylococcus epidermidis (strain ATCC 35984 / DSM 28319 / BCRC 17069 / CCUG 31568 / BM 3577 / RP62A).